Reading from the N-terminus, the 202-residue chain is Ribosome maturation factor RimM (202 aa).

A PRC barrel domain is found at 100 to 195 (ADEWYPKDLI…YLTLDPPGGL (96 aa)).

The protein belongs to the RimM family. As to quaternary structure, binds ribosomal protein uS19.

The protein resides in the cytoplasm. Functionally, an accessory protein needed during the final step in the assembly of 30S ribosomal subunit, possibly for assembly of the head region. Essential for efficient processing of 16S rRNA. May be needed both before and after RbfA during the maturation of 16S rRNA. It has affinity for free ribosomal 30S subunits but not for 70S ribosomes. The protein is Ribosome maturation factor RimM of Bifidobacterium longum (strain NCC 2705).